We begin with the raw amino-acid sequence, 243 residues long: ATP synthase subunit a (243 aa).

The next 8 helical transmembrane spans lie at 29-49 (NASL…YVGL), 54-74 (VIPN…VSTI), 89-109 (VFTI…PLGF), 114-134 (HIAV…FIGF), 141-161 (FLHI…MVLI), 177-197 (LAAN…FVIN), 200-220 (IFLT…EIFV), and 221-241 (AILQ…DAVN).

The protein belongs to the ATPase A chain family. In terms of assembly, F-type ATPases have 2 components, CF(1) - the catalytic core - and CF(0) - the membrane proton channel. CF(1) has five subunits: alpha(3), beta(3), gamma(1), delta(1), epsilon(1). CF(0) has three main subunits: a(1), b(2) and c(9-12). The alpha and beta chains form an alternating ring which encloses part of the gamma chain. CF(1) is attached to CF(0) by a central stalk formed by the gamma and epsilon chains, while a peripheral stalk is formed by the delta and b chains.

The protein localises to the cell inner membrane. In terms of biological role, key component of the proton channel; it plays a direct role in the translocation of protons across the membrane. This is ATP synthase subunit a from Ehrlichia ruminantium (strain Welgevonden).